The chain runs to 189 residues: Ribonuclease M5 (189 aa).

The 84-residue stretch at 8–91 (KEIIVVEGKD…AFLPKEEALA (84 aa)) folds into the Toprim domain. Mg(2+)-binding residues include glutamate 14, aspartate 60, and aspartate 62.

The protein belongs to the ribonuclease M5 family. Mg(2+) serves as cofactor.

The protein localises to the cytoplasm. The catalysed reaction is Endonucleolytic cleavage of RNA, removing 21 and 42 nucleotides, respectively, from the 5'- and 3'-termini of a 5S-rRNA precursor.. Required for correct processing of both the 5' and 3' ends of 5S rRNA precursor. Cleaves both sides of a double-stranded region yielding mature 5S rRNA in one step. The polypeptide is Ribonuclease M5 (Bacillus cereus (strain ATCC 14579 / DSM 31 / CCUG 7414 / JCM 2152 / NBRC 15305 / NCIMB 9373 / NCTC 2599 / NRRL B-3711)).